Here is a 715-residue protein sequence, read N- to C-terminus: Polyribonucleotide nucleotidyltransferase (715 aa).

2 residues coordinate Mg(2+): Asp-490 and Asp-496. Positions 557-616 (PRIETMTIPTDKIREVIGSGGKVIREIVETSGAKVDISDDGTIKIASANADSIKKAYDMI) constitute a KH domain. Residues 626-694 (GKIYVGKVVK…DRGKVRLGMK (69 aa)) enclose the S1 motif domain.

The protein belongs to the polyribonucleotide nucleotidyltransferase family. Mg(2+) is required as a cofactor.

The protein resides in the cytoplasm. It catalyses the reaction RNA(n+1) + phosphate = RNA(n) + a ribonucleoside 5'-diphosphate. Functionally, involved in mRNA degradation. Catalyzes the phosphorolysis of single-stranded polyribonucleotides processively in the 3'- to 5'-direction. The chain is Polyribonucleotide nucleotidyltransferase from Paracoccus denitrificans (strain Pd 1222).